Reading from the N-terminus, the 479-residue chain is Protein kinase 2 (479 aa).

Positions 1–136 are disordered; that stretch reads MGKGQSKIKN…NGNDDEDEGP (136 aa). Low complexity-rich tracts occupy residues 52–65 and 79–96; these read AQQQ…TTAA and IPAP…TPTI. The span at 102–115 shows a compositional bias: polar residues; the sequence is NTDNNNINGASNEA. Residues 153–407 form the Protein kinase domain; that stretch reads FELLNVIGKG…GGEVKQHPWF (255 aa). Residues 159–167 and lysine 182 contribute to the ATP site; that span reads IGKGSFGKV. Aspartate 276 acts as the Proton acceptor in catalysis. Threonine 309 is subject to Phosphothreonine; by autocatalysis. Positions 408–479 constitute an AGC-kinase C-terminal domain; sequence KNIDWEKLDR…TYVADSILKD (72 aa). Threonine 470 is modified (phosphothreonine).

The protein belongs to the protein kinase superfamily. AGC Ser/Thr protein kinase family. S6 kinase subfamily. Seems to be myristoylated.

It localises to the cytoplasm. Its subcellular location is the cell membrane. It carries out the reaction L-seryl-[protein] + ATP = O-phospho-L-seryl-[protein] + ADP + H(+). It catalyses the reaction L-threonyl-[protein] + ATP = O-phospho-L-threonyl-[protein] + ADP + H(+). Required for morphogenesis during multicellular development. Phosphorylates talB, gefN, gefS, PI4P 5-kinase and gacQ. The sequence is that of Protein kinase 2 (pkgB) from Dictyostelium discoideum (Social amoeba).